A 177-amino-acid chain; its full sequence is Macro domain-containing protein in non 5'region (177 aa).

The Macro domain occupies 1–177; that stretch reads MSTSVSPVVR…VEFEEVLAMR (177 aa).

This sequence belongs to the MacroD-type family.

In Streptomyces griseus, this protein is Macro domain-containing protein in non 5'region.